Consider the following 522-residue polypeptide: Colicin-E1 (522 aa).

2 disordered regions span residues Asn26–His52 and Glu136–Ala165. Residues Asp30 to Gly42 show a composition bias toward gly residues. The next 2 membrane-spanning stretches (helical) occupy residues Ala471 to Leu487 and Ile494 to Lys510.

It belongs to the channel forming colicin family.

It localises to the cell membrane. Its function is as follows. This colicin is a channel-forming colicin. This class of transmembrane toxins depolarize the cytoplasmic membrane, leading to dissipation of cellular energy. Functionally, colicins are polypeptide toxins produced by and active against E.coli and closely related bacteria. The polypeptide is Colicin-E1 (cea) (Escherichia coli).